The chain runs to 294 residues: Tetraspanin-15 (294 aa).

Over 1 to 23 (MPRGDSEQVRYCARFSYLWLKFS) the chain is Cytoplasmic. Residues 24 to 44 (LVIYSTVFWLIGGLVLSVGIY) traverse the membrane as a helical segment. At 45–62 (AEVERQKYKTLESAFLAP) the chain is on the extracellular side. The helical transmembrane segment at 63–83 (AIILILLGVVMFIVSFIGVLA) threads the bilayer. The Cytoplasmic segment spans residues 84-93 (SLRDNLCLLQ). The helical transmembrane segment at 94 to 114 (AFMYILGICLIIELIGGVVAL) threads the bilayer. At 115 to 235 (IFRNQTIDFL…WFTDNYTIMA (121 aa)) the chain is on the extracellular side. Residue asparagine 118 is glycosylated (N-linked (GlcNAc...) asparagine). 4 cysteine pairs are disulfide-bonded: cysteine 154–cysteine 219, cysteine 155–cysteine 185, cysteine 171–cysteine 179, and cysteine 186–cysteine 198. N-linked (GlcNAc...) asparagine glycans are attached at residues asparagine 189 and asparagine 230. A helical membrane pass occupies residues 236-256 (GVLLGILLPQFLGVLLTFLYI). The Cytoplasmic segment spans residues 257–294 (TRVEDIITEHSVTDGLLGPGTKAGVEAAGTGCCMCYPI).

This sequence belongs to the tetraspanin (TM4SF) family. As to quaternary structure, interacts with ADAM10; the interaction influences ADAM10 substrate specificity, endocytosis and turnover. In terms of processing, palmitoylated.

The protein localises to the cell membrane. Its subcellular location is the late endosome membrane. Functionally, part of TspanC8 subgroup, composed of 6 members that interact with the transmembrane metalloprotease ADAM10. This interaction is required for ADAM10 exit from the endoplasmic reticulum and for enzymatic maturation and trafficking to the cell surface as well as substrate specificity. Different TspanC8/ADAM10 complexes have distinct substrates. Promotes ADAM10-mediated cleavage of CDH2. Negatively regulates ligand-induced Notch activity probably by regulating ADAM10 activity. This chain is Tetraspanin-15 (TSPAN15), found in Bos taurus (Bovine).